We begin with the raw amino-acid sequence, 353 residues long: MRLTIIIPTCNNEATIRQLLISIESKEHYRILCIDGGSTDQTIPMIERLQRELKHISLIQLQNASIATCINKGLMDIKMTDPHDSDAFMVINPTSIVLPGKLDRLTAAFKNNDNIDMVIGQRAYNYHGEWKLKSADEFIKDNRIVTLTEQPDLLSMMSFDGKLFSAKFAELQCDETLANTYNHAILVKAMQKATDIHLVSQMIVGDNDIDTHATSNDEDFNRYIIEIMKIRQRVMEMLLLPEQRLLYSDMVDRILFNNSLKYYMNEHPAVTHTTIQLVKDYIMSMQHSDYVSQNMFDIINTVEFIGENWDREIYELWRQTLIQVGINRPTYKKFLIQLKGRKFAHRTKSMLKR.

This sequence belongs to the glycosyltransferase 2 family.

This is Putative glycosyltransferase TagX (tagX) from Staphylococcus aureus (strain Mu50 / ATCC 700699).